The following is a 336-amino-acid chain: MLESDRLISSQSIVSEDAMDRAIRPLSLSEYVGQDSVSSQMQIFINAARKRNDPLDHVLIFGPPGLGKTTLANIIAHEMGVNIRQTSGPVIERAGDIAAILTNLQQNDVLFIDEIHRLSPVIEEILYPAMEDYKLDIMIGEGPAARSIKLELPPFTLIGATTRAGLLTSPLRDRFGIVQRLEYYSVDSLTQIVARSAHLLGVPTKPEGAREVALRSRGTPRIANRLLRRVRDYSEVKGNGIITVDMAQQALEMLEVDQHGFDLMDRKLLLAVIEHFNGGPVGIDSIAAAIGEEKGTIEDVLEPFLIQQGFLMRTPRGRIATSKAYQHFGFSAIEQE.

Residues 4–184 form a large ATPase domain (RuvB-L) region; that stretch reads SDRLISSQSI…FGIVQRLEYY (181 aa). ATP is bound by residues Ile-23, Arg-24, Gly-65, Lys-68, Thr-69, Thr-70, 131–133, Arg-174, Tyr-184, and Arg-221; that span reads EDY. Mg(2+) is bound at residue Thr-69. The segment at 185-255 is small ATPAse domain (RuvB-S); sequence SVDSLTQIVA…MAQQALEMLE (71 aa). Residues 258-336 are head domain (RuvB-H); it reads QHGFDLMDRK…HFGFSAIEQE (79 aa). DNA-binding residues include Arg-313 and Arg-318.

It belongs to the RuvB family. As to quaternary structure, homohexamer. Forms an RuvA(8)-RuvB(12)-Holliday junction (HJ) complex. HJ DNA is sandwiched between 2 RuvA tetramers; dsDNA enters through RuvA and exits via RuvB. An RuvB hexamer assembles on each DNA strand where it exits the tetramer. Each RuvB hexamer is contacted by two RuvA subunits (via domain III) on 2 adjacent RuvB subunits; this complex drives branch migration. In the full resolvosome a probable DNA-RuvA(4)-RuvB(12)-RuvC(2) complex forms which resolves the HJ.

The protein localises to the cytoplasm. It catalyses the reaction ATP + H2O = ADP + phosphate + H(+). Functionally, the RuvA-RuvB-RuvC complex processes Holliday junction (HJ) DNA during genetic recombination and DNA repair, while the RuvA-RuvB complex plays an important role in the rescue of blocked DNA replication forks via replication fork reversal (RFR). RuvA specifically binds to HJ cruciform DNA, conferring on it an open structure. The RuvB hexamer acts as an ATP-dependent pump, pulling dsDNA into and through the RuvAB complex. RuvB forms 2 homohexamers on either side of HJ DNA bound by 1 or 2 RuvA tetramers; 4 subunits per hexamer contact DNA at a time. Coordinated motions by a converter formed by DNA-disengaged RuvB subunits stimulates ATP hydrolysis and nucleotide exchange. Immobilization of the converter enables RuvB to convert the ATP-contained energy into a lever motion, pulling 2 nucleotides of DNA out of the RuvA tetramer per ATP hydrolyzed, thus driving DNA branch migration. The RuvB motors rotate together with the DNA substrate, which together with the progressing nucleotide cycle form the mechanistic basis for DNA recombination by continuous HJ branch migration. Branch migration allows RuvC to scan DNA until it finds its consensus sequence, where it cleaves and resolves cruciform DNA. This is Holliday junction branch migration complex subunit RuvB from Legionella pneumophila (strain Lens).